We begin with the raw amino-acid sequence, 80 residues long: Lantibiotic Flvalpha.a (80 aa).

A propeptide spans 1–38 (MNKNPIYRSEEEAKDIACGNVAAELDENSQALDAINGA) (cleaved by FlvT). A 2,3-didehydrobutyrine; by FlvM1 mark is found at threonine 43 and threonine 47. The beta-methyllanthionine (Thr-Cys); by FlvM1 cross-link spans 52-55 (TVGC). The segment at residues 58 to 68 (SYGLGNGGYCC) is a cross-link (lanthionine (Ser-Cys); by FlvM1). 2 cross-links (beta-methyllanthionine (Thr-Cys); by FlvM1) span residues 69-74 (TYTVEC) and 71-78 (TVECSKTC).

The lanthionine formed by Ser-58 and Cys-68 forms a putative lipid II binding motif. In terms of processing, maturation of FlvA1 peptides involves the enzymatic conversion of Thr, and Ser into dehydrated AA and the formation of thioether bonds with cysteines. Modifications are processed by the flavecin synthetase FlvM1. This is followed by membrane translocation and cleavage of the modified precursor. Post-translationally, contains DL-lanthionine and DL-beta-methyllanthionine, when coepressed in E.coli with the flavecin synthetase FlvM1.

It is found in the secreted. Functionally, lanthionine-containing peptide antibiotic (lantibiotic) only active on Gram-positive bacteria in synergy with Flvbeta peptides, which are encoded by the same operon than Flvalpha.a. Shows antibacterial activity in synergy with Flvbeta.b, Flvbeta.c, Flvbeta.e and Flvbeta.g. Does not show antibacterial activity when tested with Flvbeta.a, Flvbeta.d, Flvbeta.f and Flvbeta.h. The bactericidal activity of lantibiotics is based on depolarization of energized bacterial cytoplasmic membranes, initiated by the formation of aqueous transmembrane pores. The polypeptide is Lantibiotic Flvalpha.a (Ruminococcus flavefaciens).